The primary structure comprises 57 residues: uncharacterized protein (57 aa).

Positions histidine 31–phenylalanine 57 are disordered. Positions glutamine 33 to phenylalanine 57 are enriched in polar residues.

This is an uncharacterized protein from Invertebrate iridescent virus 6 (IIV-6).